We begin with the raw amino-acid sequence, 476 residues long: Aspartyl/glutamyl-tRNA(Asn/Gln) amidotransferase subunit B (476 aa).

This sequence belongs to the GatB/GatE family. GatB subfamily. Heterotrimer of A, B and C subunits.

The enzyme catalyses L-glutamyl-tRNA(Gln) + L-glutamine + ATP + H2O = L-glutaminyl-tRNA(Gln) + L-glutamate + ADP + phosphate + H(+). It catalyses the reaction L-aspartyl-tRNA(Asn) + L-glutamine + ATP + H2O = L-asparaginyl-tRNA(Asn) + L-glutamate + ADP + phosphate + 2 H(+). In terms of biological role, allows the formation of correctly charged Asn-tRNA(Asn) or Gln-tRNA(Gln) through the transamidation of misacylated Asp-tRNA(Asn) or Glu-tRNA(Gln) in organisms which lack either or both of asparaginyl-tRNA or glutaminyl-tRNA synthetases. The reaction takes place in the presence of glutamine and ATP through an activated phospho-Asp-tRNA(Asn) or phospho-Glu-tRNA(Gln). This is Aspartyl/glutamyl-tRNA(Asn/Gln) amidotransferase subunit B from Geobacillus kaustophilus (strain HTA426).